Reading from the N-terminus, the 152-residue chain is Small ribosomal subunit protein bS6 (152 aa).

Positions 96 to 152 are disordered; it reads HEEGPSAMLQKRDRDDRGPREGGDRGPRREFGDRPPRRDGDFQRGPRPDRAPREDRA.

Belongs to the bacterial ribosomal protein bS6 family.

Functionally, binds together with bS18 to 16S ribosomal RNA. The polypeptide is Small ribosomal subunit protein bS6 (Rhizobium etli (strain CIAT 652)).